The following is a 102-amino-acid chain: Putative toxin YafQ (102 aa).

Belongs to the RelE toxin family. YafQ subfamily.

Its function is as follows. Toxic component of a type II toxin-antitoxin (TA) system. Its cognate antitoxin is RelB. This is Putative toxin YafQ from Haemophilus influenzae (strain ATCC 51907 / DSM 11121 / KW20 / Rd).